A 399-amino-acid chain; its full sequence is MGSTAEDFVIKPMKGEHGFGAEIYGLDVNNITDEQVDRLRDTIQRYLLVVLKHQHDETPQKNWELLNRLSPDAPKFTPEEWALMYNPDPQGAGILPKLGYLVLPGTERLFLMGKGYQGEDHWGLKDIDIPEVFADAYYSKPLPHEDYHNGVARFQSWHIDGPSYKIDHPMFTSFRIIKFPEGEQTVDWADGSGLTKKVKAGRTAFFSSAKLYDMLTKEEQAIADYSWAEYMYFPYEWILRCRGNPQGLLVACEGREVPDEQMDAMPRNPEDQLVLPLVWVNPVTGGKHFHVQPNIVRRVFVRSGPDEEPKIIDDVKEVRDFFTKFQYRIIRPENIYVGPEEEGDQLLFFNWGVMHSKIDYPIEMGTRTTHQGWLAGDRPPKGPVPIPDPRARSSIYYQK.

His158 and Asp160 together coordinate Fe cation. Residue Thr203 participates in 2-oxoglutarate binding. Position 355 (His355) interacts with Fe cation. Arg367 contacts 2-oxoglutarate. The segment at 371–399 is disordered; sequence QGWLAGDRPPKGPVPIPDPRARSSIYYQK.

Belongs to the TfdA dioxygenase family. Fe(2+) serves as cofactor.

It functions in the pathway mycotoxin biosynthesis. Its function is as follows. Alpha-ketoglutarate-dependent dioxygenase; part of the 2 gene clusters that mediate the biosynthesis of fusicoccins, diterpene glucosides that display phytohormone-like activity and function as potent activators of plasma membrane H(+)-ATPases in plants by modifying 14-3-3 proteins and cause the plant disease constriction canker. The first step in the pathway is performed by the fusicoccadiene synthase PaFS that possesses both prenyl transferase and terpene cyclase activity, converting isopentenyl diphosphate and dimethylallyl diphosphate into geranylgeranyl diphosphate (GGDP) and successively converting GGDP into fusicocca-2,10(14)-diene, a precursor for fusicoccin H. The second step is the oxidation at the C-8 position by the cytochrome P450 monooxygenase PaP450-2 to yield fusicocca-2,10(14)-diene-8-beta-ol. The cytochrome P450 monooxygenase PaP450-1 then catalyzes the hydroxylation at the C-16 position to produce fusicocca-2,10(14)-diene-8-beta,16-diol. The dioxygenase fc-dox then catalyzes the 16-oxydation of fusicocca-2,10(14)-diene-8-beta,16-diol to yield an aldehyde (8-beta-hydroxyfusicocca-1,10(14)-dien-16-al). The short-chain dehydrogenase/reductase fc-sdr catalyzes the reduction of the aldehyde to yield fusicocca-1,10(14)-diene-8-beta,16-diol. The next step is the hydroxylation at C-9 performed by the cytochrome P450 monooxygenase PaP450-3 that leads to fusicoccin H aglycon which is glycosylated to fusicoccin H by the O-glycosyltransferase PaGT. Hydroxylation at C-12 by the cytochrome P450 monooxygenase PaP450-4 leads then to the production of fusicoccin Q and is followed by methylation by the O-methyltransferase PaMT to yield fusicoccin P. Fusicoccin P is further converted to fusicoccin J via prenylation by the O-glucose prenyltransferase PaPT. Cytochrome P450 monooxygenase PaP450-5 then performs hydroxylation at C-19 to yield dideacetyl-fusicoccin A which is acetylated to 3'-O-deacetyl-fusicoccin A by the O-acetyltransferase PaAT-2. Finally, a another acetylation by the O-acetyltransferase PaAT-1 yields fusicoccin A. This chain is Alpha-ketoglutarate-dependent dioxygenase fc-dox, found in Phomopsis amygdali (Fusicoccum amygdali).